The sequence spans 258 residues: UPF0246 protein CKO_03380 (258 aa).

It belongs to the UPF0246 family.

The protein is UPF0246 protein CKO_03380 of Citrobacter koseri (strain ATCC BAA-895 / CDC 4225-83 / SGSC4696).